The sequence spans 187 residues: Protein GrpE (187 aa).

Over residues 1–11 (MTDSSNEHETE) the composition is skewed to basic and acidic residues. The interval 1–21 (MTDSSNEHETENPSLPIPDNE) is disordered.

The protein belongs to the GrpE family. As to quaternary structure, homodimer.

The protein resides in the cytoplasm. Participates actively in the response to hyperosmotic and heat shock by preventing the aggregation of stress-denatured proteins, in association with DnaK and GrpE. It is the nucleotide exchange factor for DnaK and may function as a thermosensor. Unfolded proteins bind initially to DnaJ; upon interaction with the DnaJ-bound protein, DnaK hydrolyzes its bound ATP, resulting in the formation of a stable complex. GrpE releases ADP from DnaK; ATP binding to DnaK triggers the release of the substrate protein, thus completing the reaction cycle. Several rounds of ATP-dependent interactions between DnaJ, DnaK and GrpE are required for fully efficient folding. The polypeptide is Protein GrpE (Chlamydia caviae (strain ATCC VR-813 / DSM 19441 / 03DC25 / GPIC) (Chlamydophila caviae)).